Reading from the N-terminus, the 597-residue chain is Probable serine/threonine-protein kinase DDB_G0281745 (597 aa).

Residues 49-61 are compositionally biased toward polar residues; sequence TIDNSNGKQSTTP. Residues 49–320 are disordered; sequence TIDNSNGKQS…RNNESTATTA (272 aa). Positions 72-97 are enriched in pro residues; sequence QPPPQQSQQQPPQPLKPIPATRPVPT. The segment covering 114 to 140 has biased composition (polar residues); the sequence is TLPTTNSSTKYSTLPSRQFFEVSSSPG. A compositionally biased stretch (low complexity) spans 157 to 168; that stretch reads SLSSNQNGSNLN. Positions 208 to 234 are enriched in pro residues; that stretch reads PSPPSPPLQSPQPTPQQQPPPLKPIPQ. Low complexity predominate over residues 235–264; the sequence is PQQQQQQQQQQQQQQQQQQQQQQQQQQQQQ. A compositionally biased stretch (pro residues) spans 265–274; sequence QPPPLKPIPQ. The segment covering 275-301 has biased composition (low complexity); it reads PQQSQPTQPIKSQIQIPITNTNGNTNG. The Protein kinase domain maps to 334-585; sequence KFVGNEIGSG…KVLDTIQNIY (252 aa). ATP is bound by residues 340 to 348 and lysine 361; that span reads IGSGKYGSV. The Proton acceptor role is filled by aspartate 454.

The protein belongs to the protein kinase superfamily. TKL Ser/Thr protein kinase family.

It carries out the reaction L-seryl-[protein] + ATP = O-phospho-L-seryl-[protein] + ADP + H(+). The enzyme catalyses L-threonyl-[protein] + ATP = O-phospho-L-threonyl-[protein] + ADP + H(+). This is Probable serine/threonine-protein kinase DDB_G0281745 from Dictyostelium discoideum (Social amoeba).